The sequence spans 177 residues: Ubiquitin-conjugating enzyme E2 C (177 aa).

The interval 1–31 (MSGQNIDPAANQVRQKERPRDMTTSKERHSV) is disordered. Basic and acidic residues predominate over residues 14–30 (RQKERPRDMTTSKERHS). Positions 30-175 (SVSKRLQQEL…LHEKYKTAQS (146 aa)) constitute a UBC core domain. Catalysis depends on Cys114, which acts as the Glycyl thioester intermediate.

This sequence belongs to the ubiquitin-conjugating enzyme family. As to quaternary structure, component of the APC/C complex. Autoubiquitinated by the APC/C complex, leading to its degradation by the proteasome.

It catalyses the reaction S-ubiquitinyl-[E1 ubiquitin-activating enzyme]-L-cysteine + [E2 ubiquitin-conjugating enzyme]-L-cysteine = [E1 ubiquitin-activating enzyme]-L-cysteine + S-ubiquitinyl-[E2 ubiquitin-conjugating enzyme]-L-cysteine.. It carries out the reaction S-ubiquitinyl-[E1 ubiquitin-activating enzyme]-L-cysteine + [acceptor protein]-L-lysine = [E1 ubiquitin-activating enzyme]-L-cysteine + N(6)-monoubiquitinyl-[acceptor protein]-L-lysine.. It participates in protein modification; protein ubiquitination. Its function is as follows. Catalyzes the covalent attachment of ubiquitin to other proteins. Acts as an essential factor of the anaphase promoting complex/cyclosome (APC/C), a cell cycle-regulated ubiquitin ligase that is essential for the transition from metaphase to anaphase in mitosis. Involved in both degradation of proteins responsible for maintaining sister chromatid cohesion at the onset of anaphase and of mitotic cyclins A and B at the exit of mitosis. Acts by initiating polyubiquitin chains on APC/C substrates, leading to the degradation of APC/C substrates by the proteasome and promoting mitotic exit. The sequence is that of Ubiquitin-conjugating enzyme E2 C (UBE2C) from Spisula solidissima (Atlantic surf-clam).